The primary structure comprises 341 residues: Terpene synthase 9 (341 aa).

The short motif at 81–86 (DDILDS) is the DDxx(x)D/E motif element. An NDxxSxxxD/E motif motif is present at residues 222–230 (NDMASYCKE).

This sequence belongs to the terpene synthase family.

It carries out the reaction (2E,6E)-farnesyl diphosphate = (1S,2S,4R)-beta-elemene + diphosphate. The enzyme catalyses (2E,6E)-farnesyl diphosphate = germacrene D + diphosphate. In terms of biological role, terpene synthase that converts its substrate farnesyl diphosphate (FPP) into the sesquiterpenes beta-elemene, germacrene D and a yet unidentified sesquiterpene. In Dictyostelium purpureum (Slime mold), this protein is Terpene synthase 9.